A 262-amino-acid chain; its full sequence is Elongator complex protein 5 (262 aa).

2 disordered regions span residues 181 to 214 and 229 to 262; these read TPLD…FKIE and PYER…DLCI. Positions 200-211 are enriched in polar residues; the sequence is AEQTTEPASSTF. Residues 246 to 262 show a composition bias toward acidic residues; that stretch reads DADDDFDEEDPDEDLCI.

This sequence belongs to the ELP5 family. Component of the elongator complex composed of Elp1, Elp2, Elp3, Elp4, Elp5 and Elp6. The elongator complex associates with and stabilizes microtubules; efficient interaction requires the full complex.

The protein localises to the cytoplasm. It localises to the nucleus. It is found in the cytoskeleton. The protein resides in the spindle. Its pathway is tRNA modification; 5-methoxycarbonylmethyl-2-thiouridine-tRNA biosynthesis. Its function is as follows. Component of the elongator complex, which is required for multiple tRNA modifications, including mcm5U (5-methoxycarbonylmethyl uridine), mcm5s2U (5-methoxycarbonylmethyl-2-thiouridine), and ncm5U (5-carbamoylmethyl uridine). The elongator complex catalyzes the formation of carboxymethyluridine in the wobble base at position 34 in tRNAs. Binding by the elongator complex stabilizes microtubules and promotes their growth. This induces central spindle asymmetry, promoting polarized signaling endosome trafficking during asymmetric cell division and cell fate assignation of sensory organ precursor cells. This chain is Elongator complex protein 5, found in Drosophila melanogaster (Fruit fly).